Reading from the N-terminus, the 65-residue chain is Large ribosomal subunit protein bL35 (65 aa).

It belongs to the bacterial ribosomal protein bL35 family.

This is Large ribosomal subunit protein bL35 from Prochlorococcus marinus (strain MIT 9301).